The sequence spans 176 residues: Glycine-rich RNA-binding protein 7 (176 aa).

An N-acetylalanine modification is found at A2. Residues 2–41 (ASGDVEYRCFVGGLAWATDDRALETAFAQYGDVIDSKIIN) are required for RNA chaperone activity. The RRM domain occupies 8–86 (YRCFVGGLAW…RSITVNEAQS (79 aa)). R49 is subject to ADP-ribosylarginine; by HopU1. The tract at residues 83–103 (EAQSRGSGGGGGHRGGGGGGY) is disordered. Over residues 88–103 (GSGGGGGHRGGGGGGY) the composition is skewed to gly residues. Positions 88–175 (GSGGGGGHRG…GYGGSGGGGG (88 aa)) are glycine-rich (GR) required for cell-to-cell movement. The tract at residues 97-148 (GGGGGGYRSGGGGGYSGGGGSYGGGGGRREGGGGYSGGGGGYSSRGGGGGSY) is nuclear targeting sequence (M9). S105 and S117 each carry phosphoserine. Positions 131–176 (YSGGGGGYSSRGGGGGSYGGGRREGGGGYGGGEGGGYGGSGGGGGW) are disordered.

The protein belongs to the GR-RBP family. In terms of assembly, interacts with TRN1. Interacts with the Pseudomonas syringae type III effector HopU1. Binds to small phloem-mobile single-stranded RNAs (ss-sRNA, e.g. small interfering RNA (siRNA) and microRNA (miRNA)) in the phloeme exudate, including viral-derived sRNA (vsiRNA). Post-translationally, ADP-ribosylated by the Pseudomonas syringae type III effector HopU1. ADP-ribosylation reduces the ability of the protein to bind RNA. As to expression, ubiquitous with strong expression in guard cell.

It is found in the cytoplasm. Its subcellular location is the nucleus. The protein resides in the secreted. In terms of biological role, plays a role in RNA transcription or processing during stress. Binds RNAs and DNAs sequence with a preference to single-stranded nucleic acids. Displays strong affinity to poly(U) and poly(G) sequence. Involved in mRNA alternative splicing of numerous targets by modulating splice site selection. Negatively regulates the circadian oscillations of its own transcript as well as RBG8 transcript. Forms an interlocked post-transcriptional negative feedback loop with the RBG8 autoregulatory circuit. Both proteins negatively autoregulate and reciprocally crossregulate by binding to their pre-mRNAs and promoting unproductive splicing coupled to degradation via the NMD pathway. Involved in the regulation of abscisic acid and stress responses. Affects the growth and stress tolerance under high salt and dehydration stress conditions, and also confers freezing tolerance, particularly via the regulation of stomatal opening and closing in the guard cells. Exhibits RNA chaperone activity during the cold adaptation process. Involved in the export of mRNAs from the nucleus to the cytoplasm under cold stress conditions. Target of the Pseudomonas syringae type III effector HopU1, which could probably be involved in plant innate immunity. Component of the flowering autonomous pathway which promotes floral transition, at least partly by down-regulating FLC. Mediates cell-to-cell trafficking of RNA interference (RNAi) signals (small RNAs (sRNA), e.g. small interfering RNA (siRNA) and microRNA (miRNA)) which regulate growth and development, as well as responses to environmental inputs, including pathogen attack; can compromise zucchini yellow mosaic virus (ZYMV) and tobacco rattle virus (TRV) infections at the early stage. This Arabidopsis thaliana (Mouse-ear cress) protein is Glycine-rich RNA-binding protein 7.